The sequence spans 207 residues: ATP synthase subunit b 2 (207 aa).

A helical transmembrane segment spans residues 53–72; that stretch reads TYASQLLWLVITFGVFYLLM.

This sequence belongs to the ATPase B chain family. As to quaternary structure, F-type ATPases have 2 components, F(1) - the catalytic core - and F(0) - the membrane proton channel. F(1) has five subunits: alpha(3), beta(3), gamma(1), delta(1), epsilon(1). F(0) has three main subunits: a(1), b(2) and c(10-14). The alpha and beta chains form an alternating ring which encloses part of the gamma chain. F(1) is attached to F(0) by a central stalk formed by the gamma and epsilon chains, while a peripheral stalk is formed by the delta and b chains.

Its subcellular location is the cell inner membrane. F(1)F(0) ATP synthase produces ATP from ADP in the presence of a proton or sodium gradient. F-type ATPases consist of two structural domains, F(1) containing the extramembraneous catalytic core and F(0) containing the membrane proton channel, linked together by a central stalk and a peripheral stalk. During catalysis, ATP synthesis in the catalytic domain of F(1) is coupled via a rotary mechanism of the central stalk subunits to proton translocation. In terms of biological role, component of the F(0) channel, it forms part of the peripheral stalk, linking F(1) to F(0). The b'-subunit is a diverged and duplicated form of b found in plants and photosynthetic bacteria. This Rhizobium etli (strain ATCC 51251 / DSM 11541 / JCM 21823 / NBRC 15573 / CFN 42) protein is ATP synthase subunit b 2 (atpF2).